Consider the following 328-residue polypeptide: Lipoyl synthase (328 aa).

[4Fe-4S] cluster-binding residues include Cys-56, Cys-61, Cys-67, Cys-82, Cys-86, Cys-89, and Ser-293. The 215-residue stretch at 68–282 folds into the Radical SAM core domain; it reads WEDREATFLI…ERVGAELGFS (215 aa).

It belongs to the radical SAM superfamily. Lipoyl synthase family. Requires [4Fe-4S] cluster as cofactor.

The protein localises to the cytoplasm. The catalysed reaction is [[Fe-S] cluster scaffold protein carrying a second [4Fe-4S](2+) cluster] + N(6)-octanoyl-L-lysyl-[protein] + 2 oxidized [2Fe-2S]-[ferredoxin] + 2 S-adenosyl-L-methionine + 4 H(+) = [[Fe-S] cluster scaffold protein] + N(6)-[(R)-dihydrolipoyl]-L-lysyl-[protein] + 4 Fe(3+) + 2 hydrogen sulfide + 2 5'-deoxyadenosine + 2 L-methionine + 2 reduced [2Fe-2S]-[ferredoxin]. It functions in the pathway protein modification; protein lipoylation via endogenous pathway; protein N(6)-(lipoyl)lysine from octanoyl-[acyl-carrier-protein]: step 2/2. Functionally, catalyzes the radical-mediated insertion of two sulfur atoms into the C-6 and C-8 positions of the octanoyl moiety bound to the lipoyl domains of lipoate-dependent enzymes, thereby converting the octanoylated domains into lipoylated derivatives. This chain is Lipoyl synthase, found in Frankia alni (strain DSM 45986 / CECT 9034 / ACN14a).